The chain runs to 201 residues: Small ribosomal subunit protein uS4c (201 aa).

One can recognise an S4 RNA-binding domain in the interval 91-153; the sequence is MRLDNIVFRL…NASKKIVETN (63 aa).

Belongs to the universal ribosomal protein uS4 family. Part of the 30S ribosomal subunit. Contacts protein S5. The interaction surface between S4 and S5 is involved in control of translational fidelity.

Its subcellular location is the plastid. The protein resides in the cyanelle. Its function is as follows. One of the primary rRNA binding proteins, it binds directly to 16S rRNA where it nucleates assembly of the body of the 30S subunit. With S5 and S12 plays an important role in translational accuracy. This chain is Small ribosomal subunit protein uS4c (rps4), found in Cyanophora paradoxa.